The chain runs to 89 residues: MVNMKASMFLALAGLVLLFVVCYASESEEKEFSNELLSSVLAVDDNSKGEERECLEIFKACNPSNDQCCKSSKLVCSRKTRWCKYQIGK.

An N-terminal signal peptide occupies residues 1–24; it reads MVNMKASMFLALAGLVLLFVVCYA. The propeptide occupies 25-52; sequence SESEEKEFSNELLSSVLAVDDNSKGEER. Glutamate 53 carries the pyrrolidone carboxylic acid (Glu); partial modification. 3 cysteine pairs are disulfide-bonded: cysteine 54-cysteine 69, cysteine 61-cysteine 76, and cysteine 68-cysteine 83. Isoleucine 87 carries the isoleucine amide modification.

This sequence belongs to the neurotoxin 10 (Hwtx-1) family. 22 (Htx-4) subfamily. Two forms of huwentoxin-IV exist in the venom of H.schmidti, a non-N-terminally modified (HwTx-IV) and a naturally modified peptide with pyroglutamic acid residue at position 53 (mHwTx-IV). mHwTx-IV shows no observable difference with the unmodified toxin when applied to the TTX-S sodium channel of DRG neuron (IC(50)~50 nM) or when tested on hNav1.7/SCN9A (IC(50)=30.8 nM). In addition, similarly to the unmodified toxin, mHwTx-IV has only a weak affinity for lipid membranes. However, in contrast with HwTx-IV, which dissociates at moderate and high depolarization voltages (50-200 mV), mHwTx-IV inhibition of TTX-sensitive sodium channels is not reversed by strong depolarization voltages. Expressed by the venom gland.

The protein resides in the secreted. Functionally, this lethal neurotoxin (without cyclization at position 53) inhibits neuronal voltage-gated sodium channel Nav1.2/SCN2A (IC(50)=10-150 nM), rNav1.3/SCN3A (IC(50)=338 nM), Nav1.6/SCN8A (IC(50)=117 nM), and hNav1.7/SCN9A (IC(50)=9.6-33 nM). It inhibits activation of sodium channel by trapping the voltage sensor of domain II (DIIS4) in the closed configuration. The toxin neither shifts the Nav1.7/SCN9A activation curve nor modifies the slope factor. It does not slow fast-inactivation of hNav1.7/SCN9A channels. In addition, it has only a weak affinity for lipid membranes. This toxin also exists with a pyroglutamate at position 53. The sole difference observed between modified (mHwTx-IV) and unmodified toxins is that moderate or high depolarization voltages (200 mV) permit the unmodified toxin to dissociate, whereas mHwTx-IV toxin does not dissociate, even at high depolarization voltages. These data indicate that mHwTx-IV strongly binds to voltage sensor of sodium channel even at extreme depolarization voltages. This is Huwentoxin-IV from Cyriopagopus schmidti (Chinese bird spider).